The chain runs to 379 residues: MSSVTIERIETCLVDLPTIRPHKLSVATMYGQTLMLVKVYCTDGAVGIGEGTTIAGMAYGPESPEAMKLAIDAYFAPALVGKDATRIQTLMAHLGKLVKINHFAKSALETALLDAHGKRLGVAVSELLGGRRRERLPVAWTLASGDTSRDIAEAEQMIEVRRHNVFKLKIGAKELKTDIKHVAEIKRVVGEHAAVRVDVNMAWSETQAAWAIPALADAGCELVEQPVASAAALARLMRRFPVALMADEILQGPDNAFEIARVNGADVFAIKIEQSGGLFAAQRVAAIADAAGIELYGGTMLEGAFSTVASAHLFASFANLQWGTELFGPLLITEEILTKPLDYSDYQLTVPDGPGLGIELDEEKVRRFTRDGLIKVTKA.

The active site involves K169. Residues D198, E224, and D247 each contribute to the Mn(2+) site.

The protein belongs to the mandelate racemase/muconate lactonizing enzyme family. In terms of assembly, homooctamer. Mn(2+) serves as cofactor.

It carries out the reaction (S)-muconolactone = cis,cis-muconate + H(+). Its pathway is aromatic compound metabolism; beta-ketoadipate pathway; 5-oxo-4,5-dihydro-2-furylacetate from catechol: step 2/3. Functionally, catalyzes a syn cycloisomerization. The chain is Muconate cycloisomerase 1-1 (catB1) from Acinetobacter lwoffii.